Reading from the N-terminus, the 391-residue chain is ATP-sensitive inward rectifier potassium channel 1 (391 aa).

The Cytoplasmic portion of the chain corresponds to 1–77 (MGASERSVFR…IWTTVLDLKW (77 aa)). Position 44 is a phosphoserine; by SGK1 (Ser-44). A helical transmembrane segment spans residues 78 to 102 (RYKMTVFITAFLGSWFLFGLLWYVV). At 103–127 (AYVHKDLPEFYPPDNRTPCVENING) the chain is on the extracellular side. Asn-117 carries an N-linked (GlcNAc...) asparagine glycan. An intramembrane region (helical; Pore-forming) is located at residues 128–139 (MTSAFLFSLETQ). Positions 140–146 (VTIGYGF) form an intramembrane region, pore-forming. The Selectivity filter signature appears at 141–146 (TIGYGF). Residues 147 to 155 (RFVTEQCAT) are Extracellular-facing. The chain crosses the membrane as a helical span at residues 156-177 (AIFLLIFQSILGVIINSFMCGA). Topologically, residues 178 to 391 (ILAKISRPKK…EVDETDDTQM (214 aa)) are cytoplasmic. The polyphosphoinositide (PIP2)-binding stretch occupies residues 180 to 207 (AKISRPKKRAKTITFSKNAVISKRGGKL). Residue 223-230 (GSHIYGKL) coordinates ATP.

This sequence belongs to the inward rectifier-type potassium channel (TC 1.A.2.1) family. KCNJ1 subfamily. In terms of assembly, interacts with SGK1 and SLC9A3R2/NHERF2. Post-translationally, phosphorylation at Ser-44 by SGK1 is necessary for its expression at the cell membrane. In terms of tissue distribution, mainly in kidney (renal cortex, medulla and papilla). Kidney.

Its subcellular location is the cell membrane. It catalyses the reaction K(+)(in) = K(+)(out). With respect to regulation, inhibited by WNK3. Activated by phosphatidylinositol 4,5 biphosphate (PtdIns(4,5)P2). Functionally, inward rectifier potassium channels are characterized by a greater tendency to allow potassium to flow into the cell rather than out of it. Their voltage dependence is regulated by the concentration of extracellular potassium; as external potassium is raised, the voltage range of the channel opening shifts to more positive voltages. The inward rectification is mainly due to the blockage of outward current by internal magnesium. This channel is activated by internal ATP and can be blocked by external barium. In the kidney, probably plays a major role in potassium homeostasis. In terms of biological role, inward rectifier potassium channels are characterized by a greater tendency to allow potassium to flow into the cell rather than out of it. Their voltage dependence is regulated by the concentration of extracellular potassium; as external potassium is raised, the voltage range of the channel opening shifts to more positive voltages. This Rattus norvegicus (Rat) protein is ATP-sensitive inward rectifier potassium channel 1 (Kcnj1).